Consider the following 335-residue polypeptide: Succinylglutamate desuccinylase (335 aa).

Zn(2+)-binding residues include His59, Glu62, and His151. Glu215 is an active-site residue.

Belongs to the AspA/AstE family. Succinylglutamate desuccinylase subfamily. It depends on Zn(2+) as a cofactor.

It catalyses the reaction N-succinyl-L-glutamate + H2O = L-glutamate + succinate. Its pathway is amino-acid degradation; L-arginine degradation via AST pathway; L-glutamate and succinate from L-arginine: step 5/5. In terms of biological role, transforms N(2)-succinylglutamate into succinate and glutamate. The protein is Succinylglutamate desuccinylase of Pseudomonas syringae pv. tomato (strain ATCC BAA-871 / DC3000).